The sequence spans 154 residues: Endoribonuclease YbeY (154 aa).

3 residues coordinate Zn(2+): H117, H121, and H127.

It belongs to the endoribonuclease YbeY family. Zn(2+) serves as cofactor.

The protein resides in the cytoplasm. Its function is as follows. Single strand-specific metallo-endoribonuclease involved in late-stage 70S ribosome quality control and in maturation of the 3' terminus of the 16S rRNA. The sequence is that of Endoribonuclease YbeY from Aromatoleum aromaticum (strain DSM 19018 / LMG 30748 / EbN1) (Azoarcus sp. (strain EbN1)).